A 291-amino-acid chain; its full sequence is ATP synthase gamma chain (291 aa).

This sequence belongs to the ATPase gamma chain family. As to quaternary structure, F-type ATPases have 2 components, CF(1) - the catalytic core - and CF(0) - the membrane proton channel. CF(1) has five subunits: alpha(3), beta(3), gamma(1), delta(1), epsilon(1). CF(0) has three main subunits: a, b and c.

Its subcellular location is the cell inner membrane. Its function is as follows. Produces ATP from ADP in the presence of a proton gradient across the membrane. The gamma chain is believed to be important in regulating ATPase activity and the flow of protons through the CF(0) complex. This chain is ATP synthase gamma chain, found in Burkholderia cenocepacia (strain ATCC BAA-245 / DSM 16553 / LMG 16656 / NCTC 13227 / J2315 / CF5610) (Burkholderia cepacia (strain J2315)).